The sequence spans 193 residues: Adenylate kinase (193 aa).

10-18 is a binding site for ATP; the sequence is GVPGVGGTT.

The protein belongs to the archaeal adenylate kinase family. As to quaternary structure, monomer.

Its subcellular location is the cytoplasm. It carries out the reaction AMP + ATP = 2 ADP. The sequence is that of Adenylate kinase from Methanococcus aeolicus (strain ATCC BAA-1280 / DSM 17508 / OCM 812 / Nankai-3).